The sequence spans 531 residues: DnaJ homolog subfamily C member 21 (531 aa).

One can recognise a J domain in the interval 3–69; it reads CHYEALGVRR…QERAWYDNHR (67 aa). Disordered regions lie at residues 279–311, 327–474, and 502–531; these read FGDG…AELY, KAMK…VPAE, and KATG…RKNR. Acidic residues predominate over residues 281–311; it reads DGSDENEMEEHELKDEEDGKDSDEAEDAELY. Serine 283 and serine 302 each carry phosphoserine. The C2H2-type 1 zinc-finger motif lies at 314–338; that stretch reads LYCPACDKSFKTEKAMKNHEKSKKH. Residues 364 to 375 show a composition bias toward acidic residues; that stretch reads NPLDDNSEEEME. At serine 370 the chain carries Phosphoserine. The span at 381–392 shows a compositional bias: basic residues; it reads KLSKKQKKKKQK. Residues 393–403 are compositionally biased toward polar residues; the sequence is PAQNYDDNFNV. The segment covering 442–453 has biased composition (basic and acidic residues); sequence KPCDDPKSEAKS. Residues 455-464 show a composition bias toward basic residues; the sequence is PKPKGKKTKD. The segment at 482 to 506 adopts a C2H2-type 2 zinc-finger fold; that stretch reads ISCTTCHSEFPSRNKLFDHLKATGH. At serine 511 the chain carries Phosphoserine. Residues 511-522 show a composition bias toward low complexity; the sequence is SSSSLNSATSSQ.

Interacts with HSPA8, PA2G4 and ZNF622. In terms of tissue distribution, expressed in brain, placenta, kidney and pancreas.

It is found in the cytoplasm. It localises to the nucleus. The protein localises to the nucleolus. Functionally, may act as a co-chaperone for HSP70. May play a role in ribosomal RNA (rRNA) biogenesis, possibly in the maturation of the 60S subunit. Binds the precursor 45S rRNA. This chain is DnaJ homolog subfamily C member 21 (DNAJC21), found in Homo sapiens (Human).